The chain runs to 575 residues: Potassium-transporting ATPase potassium-binding subunit (575 aa).

The next 12 helical transmembrane spans lie at 3–23, 69–89, 136–156, 178–198, 266–286, 293–313, 340–360, 367–387, 391–411, 431–451, 498–518, and 543–563; these read FEGVLQIVATLVLMVAIVPFF, AVLASNAAMFVPVFAVLLLQG, CFQFLMFTSAATGLAVGIAFI, ILMPISIAFAVVLLSQGVPQS, LLEILLLLAVPTSLIYTFGVL, GWVLFGTIFVLFVGLVGVAAL, FGWAQSALFATATTGTMTGAV, LTPLAGLVTLFNLCLQVIWGG, GIAYILVFLIIAVFLTGLMVG, IIFLVHPVIILVPTAIALAIP, VVLLLGRYAPIVALLALAGGL, and AGTILILGALTFFPVFALGPI.

Belongs to the KdpA family. In terms of assembly, the system is composed of three essential subunits: KdpA, KdpB and KdpC.

The protein resides in the cell inner membrane. Functionally, part of the high-affinity ATP-driven potassium transport (or Kdp) system, which catalyzes the hydrolysis of ATP coupled with the electrogenic transport of potassium into the cytoplasm. This subunit binds the periplasmic potassium ions and delivers the ions to the membrane domain of KdpB through an intramembrane tunnel. In Gloeobacter violaceus (strain ATCC 29082 / PCC 7421), this protein is Potassium-transporting ATPase potassium-binding subunit.